Reading from the N-terminus, the 531-residue chain is T-complex protein 1 subunit zeta-2 (531 aa).

It belongs to the TCP-1 chaperonin family. As to quaternary structure, component of the chaperonin-containing T-complex (TRiC), a heterooligomeric complex of about 850 to 900 kDa that forms two stacked rings, 12 to 16 nm in diameter.

Its subcellular location is the cytoplasm. Its function is as follows. Component of the chaperonin-containing T-complex (TRiC), a molecular chaperone complex that assists the folding of proteins upon ATP hydrolysis. The sequence is that of T-complex protein 1 subunit zeta-2 (CCT6B) from Bos taurus (Bovine).